The chain runs to 480 residues: NADH-quinone oxidoreductase subunit N (480 aa).

13 consecutive transmembrane segments (helical) span residues 13–33 (ISPM…QFLI), 41–61 (PLWV…YHTT), 81–101 (VWLS…APPF), 107–127 (TLFP…MFLT), 132–152 (LIVI…MIGM), 167–187 (FLLG…LYGG), 212–232 (LGLG…PFHS), 245–265 (ITGF…IILF), 276–296 (VWKY…NIVA), 314–334 (AGYI…YYLF), 373–393 (ALAL…IGFW), 413–433 (LLFG…KITI), and 454–474 (PTLG…WIFF).

It belongs to the complex I subunit 2 family. In terms of assembly, NDH-1 is composed of 14 different subunits. Subunits NuoA, H, J, K, L, M, N constitute the membrane sector of the complex.

It localises to the cell inner membrane. It catalyses the reaction a quinone + NADH + 5 H(+)(in) = a quinol + NAD(+) + 4 H(+)(out). Its function is as follows. NDH-1 shuttles electrons from NADH, via FMN and iron-sulfur (Fe-S) centers, to quinones in the respiratory chain. The immediate electron acceptor for the enzyme in this species is believed to be ubiquinone. Couples the redox reaction to proton translocation (for every two electrons transferred, four hydrogen ions are translocated across the cytoplasmic membrane), and thus conserves the redox energy in a proton gradient. This Leptospira biflexa serovar Patoc (strain Patoc 1 / Ames) protein is NADH-quinone oxidoreductase subunit N.